The primary structure comprises 166 residues: MIKPQLAKKIETVSFLQEKISQAKTVIVFEYSNLPVSEFMKLRRQLKKIDCEVKVYPKNIMQRAFMNTNYQDLVSLLKGIKALIISQQELLEPIKVIYNFAKQNKVVKIVSGVVEQKIVSPQEINSLATLPSKEQMLALLSVAMLSPLRQLAFALKLLSEKQATNN.

This sequence belongs to the universal ribosomal protein uL10 family. As to quaternary structure, part of the ribosomal stalk of the 50S ribosomal subunit. The N-terminus interacts with L11 and the large rRNA to form the base of the stalk. The C-terminus forms an elongated spine to which L12 dimers bind in a sequential fashion forming a multimeric L10(L12)X complex.

In terms of biological role, forms part of the ribosomal stalk, playing a central role in the interaction of the ribosome with GTP-bound translation factors. The polypeptide is Large ribosomal subunit protein uL10 (Phytoplasma australiense).